We begin with the raw amino-acid sequence, 149 residues long: Ribonuclease H (149 aa).

The region spanning 1–145 (MKKVIIYTDG…CDKLANEAMD (145 aa)) is the RNase H type-1 domain. Residues aspartate 9, glutamate 50, aspartate 72, and aspartate 137 each coordinate Mg(2+).

The protein belongs to the RNase H family. In terms of assembly, monomer. Requires Mg(2+) as cofactor.

It is found in the cytoplasm. It catalyses the reaction Endonucleolytic cleavage to 5'-phosphomonoester.. Functionally, endonuclease that specifically degrades the RNA of RNA-DNA hybrids. In Clostridium botulinum (strain ATCC 19397 / Type A), this protein is Ribonuclease H.